Here is a 101-residue protein sequence, read N- to C-terminus: Urease subunit beta (101 aa).

The protein belongs to the urease beta subunit family. In terms of assembly, heterotrimer of UreA (gamma), UreB (beta) and UreC (alpha) subunits. Three heterotrimers associate to form the active enzyme.

Its subcellular location is the cytoplasm. It catalyses the reaction urea + 2 H2O + H(+) = hydrogencarbonate + 2 NH4(+). It functions in the pathway nitrogen metabolism; urea degradation; CO(2) and NH(3) from urea (urease route): step 1/1. The chain is Urease subunit beta from Burkholderia vietnamiensis (strain G4 / LMG 22486) (Burkholderia cepacia (strain R1808)).